The chain runs to 502 residues: Glutamate--tRNA ligase (502 aa).

Residues 21-31 (PSPTGVPHVGM) carry the 'HIGH' region motif. Residues 265-269 (KLSKR) carry the 'KMSKS' region motif. Residue Lys268 coordinates ATP.

Belongs to the class-I aminoacyl-tRNA synthetase family. Glutamate--tRNA ligase type 1 subfamily. As to quaternary structure, monomer.

Its subcellular location is the cytoplasm. The catalysed reaction is tRNA(Glu) + L-glutamate + ATP = L-glutamyl-tRNA(Glu) + AMP + diphosphate. Its function is as follows. Catalyzes the attachment of glutamate to tRNA(Glu) in a two-step reaction: glutamate is first activated by ATP to form Glu-AMP and then transferred to the acceptor end of tRNA(Glu). In Mycobacterium leprae (strain TN), this protein is Glutamate--tRNA ligase.